The chain runs to 33 residues: VAKCSTSECGHACQQAGCRNSGCRYGSCICVGC.

Disulfide bonds link Cys4–Cys23, Cys9–Cys28, Cys13–Cys30, and Cys18–Cys33.

It belongs to the short scorpion toxin superfamily. Potassium channel inhibitor family. Alpha-KTx 24 subfamily. Contains 4 disulfide bonds. Expressed by the venom gland.

It localises to the secreted. Reversibly blocks voltage-gated potassium channels Kv1.2/KCNA2, Kv1.3/KCNA3 and, weakly, Shaker B. The sequence is that of Potassium channel toxin alpha-KTx 24.1 from Pandinus imperator (Emperor scorpion).